We begin with the raw amino-acid sequence, 250 residues long: Small ribosomal subunit protein uS3 (250 aa).

In terms of domain architecture, KH type-2 spans 39–107 (VREFLTKKLK…PAQVSINEID (69 aa)). The interval 215–250 (MNPAPAEERPAKRGRGRGEGQERRGRRGDRAADKGE) is disordered. Over residues 220 to 250 (AEERPAKRGRGRGEGQERRGRRGDRAADKGE) the composition is skewed to basic and acidic residues.

This sequence belongs to the universal ribosomal protein uS3 family. As to quaternary structure, part of the 30S ribosomal subunit. Forms a tight complex with proteins S10 and S14.

Functionally, binds the lower part of the 30S subunit head. Binds mRNA in the 70S ribosome, positioning it for translation. This is Small ribosomal subunit protein uS3 from Acinetobacter baumannii (strain AB307-0294).